The chain runs to 193 residues: Hypoxanthine/guanine phosphoribosyltransferase (193 aa).

Belongs to the purine/pyrimidine phosphoribosyltransferase family. Archaeal HPRT subfamily. Homodimer.

It is found in the cytoplasm. The enzyme catalyses IMP + diphosphate = hypoxanthine + 5-phospho-alpha-D-ribose 1-diphosphate. It catalyses the reaction GMP + diphosphate = guanine + 5-phospho-alpha-D-ribose 1-diphosphate. Its pathway is purine metabolism; IMP biosynthesis via salvage pathway; IMP from hypoxanthine: step 1/1. In terms of biological role, catalyzes a salvage reaction resulting in the formation of IMP that is energically less costly than de novo synthesis. This Methanothermobacter thermautotrophicus (strain ATCC 29096 / DSM 1053 / JCM 10044 / NBRC 100330 / Delta H) (Methanobacterium thermoautotrophicum) protein is Hypoxanthine/guanine phosphoribosyltransferase.